Here is a 131-residue protein sequence, read N- to C-terminus: Profilin-7 (131 aa).

Cysteines 13 and 115 form a disulfide. The Involved in PIP2 interaction signature appears at 81–97 (AVIRGKKGAGGITIKKT). The residue at position 111 (Thr-111) is a Phosphothreonine.

The protein belongs to the profilin family. Occurs in many kinds of cells as a complex with monomeric actin in a 1:1 ratio. Phosphorylated by MAP kinases.

It is found in the cytoplasm. It localises to the cytoskeleton. Binds to actin and affects the structure of the cytoskeleton. At high concentrations, profilin prevents the polymerization of actin, whereas it enhances it at low concentrations. This Olea europaea (Common olive) protein is Profilin-7.